The primary structure comprises 182 residues: ATP-dependent protease subunit HslV (182 aa).

Thr-10 is a catalytic residue. Positions 166, 169, and 172 each coordinate Na(+).

Belongs to the peptidase T1B family. HslV subfamily. In terms of assembly, a double ring-shaped homohexamer of HslV is capped on each side by a ring-shaped HslU homohexamer. The assembly of the HslU/HslV complex is dependent on binding of ATP.

The protein localises to the cytoplasm. It carries out the reaction ATP-dependent cleavage of peptide bonds with broad specificity.. Its activity is regulated as follows. Allosterically activated by HslU binding. Functionally, protease subunit of a proteasome-like degradation complex believed to be a general protein degrading machinery. In Rickettsia typhi (strain ATCC VR-144 / Wilmington), this protein is ATP-dependent protease subunit HslV.